Consider the following 164-residue polypeptide: UPF0304 protein CKO_00501 (164 aa).

The protein belongs to the UPF0304 family.

This Citrobacter koseri (strain ATCC BAA-895 / CDC 4225-83 / SGSC4696) protein is UPF0304 protein CKO_00501.